A 101-amino-acid polypeptide reads, in one-letter code: Non-structural protein 7a (101 aa).

The N-terminal stretch at 1–43 is a signal peptide; that stretch reads MLVFVHAVLVTALILLLIGRIQLLERLLLSHLLNLTTVSNVLG. A helical transmembrane segment spans residues 76–96; it reads LLVVVLRVIFLVLLGFSCYTL.

It belongs to the coronaviruses ns7/ns7a protein family.

It localises to the host membrane. In terms of biological role, may function in the formation of membrane-bound replication complexes or in the assembly of the virus. This Felidae (cat family) protein is Non-structural protein 7a.